The primary structure comprises 446 residues: Transcription factor Dp-2 (446 aa).

Thr2 carries the N-acetylthreonine modification. Ser24 bears the Phosphoserine mark. Positions 60–82 are interaction with CEBPA; that stretch reads PQMIISTPQRLTSSGSVLIGSPY. Positions 103 to 118 match the Nuclear localization signal motif; it reads GDRKRARKFIDSDFSE. Ser122 carries the post-translational modification Phosphoserine. Residues 129–210 mediate DNA binding; the sequence is GKGLRHFSMK…KKEIKWIGLP (82 aa). The DEF box motif lies at 176 to 210; that stretch reads DQKNIRRRVYDALNVLMAMNIISKEKKEIKWIGLP. Residues 219–292 are dimerization; it reads NLEIEKQRRI…RKTVIDCSIS (74 aa). The DCB1 stretch occupies residues 229-261; the sequence is ERIKQKRAQLQELLLQQIAFKNLVQRNRQNEQQ. A DCB2 region spans residues 274–330; it reads LPFIIINTSRKTVIDCSISSDKFEYLFNFDNTFEIHDDIEVLKRMGMSFGLESGKCS. Residues 409-419 show a composition bias toward low complexity; sequence SHQSSSAASHC. The interval 409-446 is disordered; the sequence is SHQSSSAASHCSESRGETPCSFNDEDEEDDEEDSSSPE. The span at 431–446 shows a compositional bias: acidic residues; it reads NDEDEEDDEEDSSSPE.

This sequence belongs to the E2F/DP family. In terms of assembly, component of the DRTF1/E2F transcription factor complex. Forms heterodimers with E2F family members. The complex can interact with hypophosphorylated retinoblastoma protein RB1 and related proteins (RBL1 and RBL2) that inhibit the E2F transactivation domain. During the cell cycle, RB becomes phosphorylated in mid-to-late G1 phase, detaches from the DRTF1/E2F complex rendering E2F transcriptionally active. Viral oncoproteins, notably E1A, T-antigen and HPV E7, are capable of sequestering RB protein, thus releasing the active complex. Interacts with GMCL. Component of the DREAM complex (also named LINC complex) at least composed of E2F4, E2F5, LIN9, LIN37, LIN52, LIN54, MYBL1, MYBL2, RBL1, RBL2, RBBP4, TFDP1 and TFDP2. The complex exists in quiescent cells where it represses cell cycle-dependent genes. It dissociates in S phase when LIN9, LIN37, LIN52 and LIN54 form a subcomplex that binds to MYBL2. The complex TFDP2:E2F1 interacts with CEBPA; the interaction prevents CEBPA binding to target genes promoters and represses its transcriptional activity. Ser-24 is probably phosphorylated by CDK2. As to expression, high levels in heart and skeletal muscle. Also found in placenta, kidney, brain, lung and liver. The presence as well as the abundance of the different transcripts appear to vary significantly in different tissues and cell lines.

The protein localises to the nucleus. In terms of biological role, can stimulate E2F-dependent transcription. Binds DNA cooperatively with E2F family members through the E2 recognition site, 5'-TTTC[CG]CGC-3', found in the promoter region of a number of genes whose products are involved in cell cycle regulation or in DNA replication. The TFDP2:E2F complex functions in the control of cell-cycle progression from G1 to S phase. The E2F1:DP complex appears to mediate both cell proliferation and apoptosis. Blocks adipocyte differentiation by repressing CEBPA binding to its target gene promoters. This is Transcription factor Dp-2 (TFDP2) from Homo sapiens (Human).